Here is a 414-residue protein sequence, read N- to C-terminus: Gamma-glutamyl phosphate reductase (414 aa).

It belongs to the gamma-glutamyl phosphate reductase family.

Its subcellular location is the cytoplasm. It carries out the reaction L-glutamate 5-semialdehyde + phosphate + NADP(+) = L-glutamyl 5-phosphate + NADPH + H(+). It participates in amino-acid biosynthesis; L-proline biosynthesis; L-glutamate 5-semialdehyde from L-glutamate: step 2/2. Catalyzes the NADPH-dependent reduction of L-glutamate 5-phosphate into L-glutamate 5-semialdehyde and phosphate. The product spontaneously undergoes cyclization to form 1-pyrroline-5-carboxylate. This Francisella philomiragia subsp. philomiragia (strain ATCC 25017 / CCUG 19701 / FSC 153 / O#319-036) protein is Gamma-glutamyl phosphate reductase.